The following is a 282-amino-acid chain: Transcription repressor OFP18 (282 aa).

Residues 1 to 85 are disordered; the sequence is MVRKMKLPFL…YSSFSSTSHA (85 aa). The span at 15 to 35 shows a compositional bias: low complexity; it reads SSSSFSSNSSSSSSSWPWPSS. The span at 36–47 shows a compositional bias: polar residues; the sequence is HQQNLKTISSKA. Residues 66–85 show a composition bias toward low complexity; it reads SFSSSPSSSSYSSFSSTSHA. One can recognise an OVATE domain in the interval 139 to 199; the sequence is LSLESNDPYT…FAAFVDLVLN (61 aa).

In terms of tissue distribution, expressed in roots and shoots.

The protein resides in the nucleus. Transcriptional repressor that regulates multiple aspects of plant growth and development through the regulation of BEL1-LIKE (BLH) and KNOX TALE (KNAT) homeodomain transcription factors. This chain is Transcription repressor OFP18 (OFP18), found in Arabidopsis thaliana (Mouse-ear cress).